A 527-amino-acid chain; its full sequence is Probable malate:quinone oxidoreductase (527 aa).

It belongs to the MQO family. The cofactor is FAD.

It carries out the reaction (S)-malate + a quinone = a quinol + oxaloacetate. It participates in carbohydrate metabolism; tricarboxylic acid cycle; oxaloacetate from (S)-malate (quinone route): step 1/1. The polypeptide is Probable malate:quinone oxidoreductase (Pectobacterium carotovorum subsp. carotovorum (strain PC1)).